Reading from the N-terminus, the 203-residue chain is Secreted phosphoprotein 24 (203 aa).

Positions 1 to 23 (MEKMAMKMLVIFVLGMNHWTCTG) are cleaved as a signal peptide. Cystine bridges form between Cys-86–Cys-97 and Cys-110–Cys-128. Ser-90 is modified (phosphoserine). Phosphoserine occurs at positions 138, 139, 166, and 175.

The protein belongs to the SPP2 family. In terms of processing, multiply phosphorylated at serine residues in Ser-X-Glu/Ser(P) sequences, a recognition motif for phosphorylation by secretory pathway protein kinase. Phosphorylation sites are present in the extracellular medium. In terms of tissue distribution, in liver and bone but not in heart, lung, kidney, or spleen.

Its subcellular location is the secreted. Could coordinate an aspect of bone turnover. The sequence is that of Secreted phosphoprotein 24 (SPP2) from Bos taurus (Bovine).